Here is a 155-residue protein sequence, read N- to C-terminus: Ribosomal RNA large subunit methyltransferase H (155 aa).

S-adenosyl-L-methionine is bound by residues Leu72, Gly103, and 122 to 127 (LSALTL).

This sequence belongs to the RNA methyltransferase RlmH family. Homodimer.

Its subcellular location is the cytoplasm. The catalysed reaction is pseudouridine(1915) in 23S rRNA + S-adenosyl-L-methionine = N(3)-methylpseudouridine(1915) in 23S rRNA + S-adenosyl-L-homocysteine + H(+). Its function is as follows. Specifically methylates the pseudouridine at position 1915 (m3Psi1915) in 23S rRNA. The chain is Ribosomal RNA large subunit methyltransferase H from Escherichia fergusonii (strain ATCC 35469 / DSM 13698 / CCUG 18766 / IAM 14443 / JCM 21226 / LMG 7866 / NBRC 102419 / NCTC 12128 / CDC 0568-73).